The sequence spans 470 residues: Mitogen-activated protein kinase 15 (470 aa).

One can recognise a Protein kinase domain in the interval 13–306; sequence FDLQKRLGKG…VEQCLVHPYV (294 aa). ATP contacts are provided by residues 19–27 and K42; that span reads LGKGAYGIV. The Proton acceptor role is filled by D137. Residue T178 is modified to Phosphothreonine. Positions 178-180 match the TXY motif; the sequence is TEY. Y180 carries the post-translational modification Phosphotyrosine. Residues 362–445 are disordered; the sequence is PYGEDKSRAP…PSSIKQRRRS (84 aa). A compositionally biased stretch (low complexity) spans 394-406; the sequence is MDKNNSSSHDSSS. Residues 409–426 show a composition bias toward basic and acidic residues; that stretch reads LRERAASAESRTSKDSNG.

This sequence belongs to the protein kinase superfamily. CMGC Ser/Thr protein kinase family. MAP kinase subfamily. Mg(2+) is required as a cofactor. Dually phosphorylated on Thr-178 and Tyr-180, which activates the enzyme. As to expression, expressed in the URX neuron and in many other head sensory neurons. Isoform a: Expressed in head and tail ciliated sensory neurons, and in mid-body neurons. Isoform c: Expressed in head and tail ciliated sensory neurons, and in mid-body neurons.

It localises to the cell projection. The protein localises to the cilium. It is found in the cilium membrane. The protein resides in the cytoplasm. Its subcellular location is the cytoskeleton. It localises to the cilium axoneme. The protein localises to the cilium basal body. It is found in the cell junction. The protein resides in the perikaryon. Its subcellular location is the dendrite. It catalyses the reaction L-seryl-[protein] + ATP = O-phospho-L-seryl-[protein] + ADP + H(+). The enzyme catalyses L-threonyl-[protein] + ATP = O-phospho-L-threonyl-[protein] + ADP + H(+). With respect to regulation, activated by threonine and tyrosine phosphorylation. Functionally, atypical MAPK protein. Regulates primary cilium formation in sensory neurons and the localization of ciliary proteins involved in cilium structure, transport, and signaling. Acts in dopamine (DA) neurons to support synaptic membrane dat-1 availability via activation of rho-1 thereby sustaining normal levels of DA clearance. Plays a role in male mating behavior, probably in part through regulating the localization of the polycystin pkd-2. Functions postembryonically in the URX sensory neurons to constrain URX dendrite growth throughout lifetime, probably by restricting expansion of the subcellular sensory compartment at the dendrite ending. This is Mitogen-activated protein kinase 15 from Caenorhabditis elegans.